The following is a 355-amino-acid chain: Heavy metal-associated isoprenylated plant protein 7 (355 aa).

A compositionally biased stretch (basic and acidic residues) spans 1–58 (MGEEEKKPEAAEEKKMEEKKPEEKKEGEDKKVDAEKKGEDSDKKPQEGESNKDSKEDS). Positions 1–74 (MGEEEKKPEA…APAPPPPPQE (74 aa)) are disordered. Residues 63-73 (PEAPAPPPPPQ) are compositionally biased toward pro residues. 2 consecutive HMA domains span residues 72–136 (PQEV…HRQV) and 170–234 (VVTV…KHAA). A metal cation is bound by residues Cys83 and Cys86. Positions 132-157 (THRQVQLLSPIPPPPPPPEKKAEEDK) are disordered. A metal cation is bound by residues Cys181 and Cys184. Positions 235–308 (IMKIDPPPPP…GGGEEEGKVV (74 aa)) are disordered. The span at 254–293 (EGEKKEEEKGEGESKGEEGKDDKAKTDEEKKEGDGGKGEG) shows a compositional bias: basic and acidic residues. Cys352 carries the post-translational modification Cysteine methyl ester. Cys352 is lipidated: S-farnesyl cysteine. The propeptide at 353–355 (TVM) is removed in mature form.

This sequence belongs to the HIPP family. Post-translationally, efficiently farnesylated in vitro.

Heavy-metal-binding protein. Binds zinc, copper and nickel in a reversible manner. The polypeptide is Heavy metal-associated isoprenylated plant protein 7 (Arabidopsis thaliana (Mouse-ear cress)).